The primary structure comprises 272 residues: Orotidine 5'-phosphate decarboxylase (272 aa).

The active-site Proton donor is Lys-95.

The protein belongs to the OMP decarboxylase family. Type 2 subfamily.

It carries out the reaction orotidine 5'-phosphate + H(+) = UMP + CO2. It participates in pyrimidine metabolism; UMP biosynthesis via de novo pathway; UMP from orotate: step 2/2. This Cupriavidus necator (strain ATCC 17699 / DSM 428 / KCTC 22496 / NCIMB 10442 / H16 / Stanier 337) (Ralstonia eutropha) protein is Orotidine 5'-phosphate decarboxylase.